Here is a 72-residue protein sequence, read N- to C-terminus: Small ribosomal subunit protein eS31 (72 aa).

Zn(2+) is bound by residues C32, C35, C51, and C54. The C4-type zinc finger occupies 32-54 (CPRCGSVMAYHKEPVPRWHCGKC).

Belongs to the eukaryotic ribosomal protein eS31 family. Part of the 30S ribosomal subunit. Zn(2+) serves as cofactor.

The chain is Small ribosomal subunit protein eS31 from Caldivirga maquilingensis (strain ATCC 700844 / DSM 13496 / JCM 10307 / IC-167).